The primary structure comprises 1380 residues: Mitogen-activated protein kinase kinase kinase 5 (1380 aa).

The interval 30–97 (CRRGGGAATA…GNSGSGGGRR (68 aa)) is disordered. A compositionally biased stretch (low complexity) spans 37–49 (ATAAEGEPSLQPL). The span at 50–59 (LVPPPPPPPG) shows a compositional bias: pro residues. Asymmetric dimethylarginine occurs at positions 85 and 87. S90 carries the phosphoserine; by PIM1 and PKB/AKT1 modification. The interaction with PPIA/CYPA stretch occupies residues 649–1374 (HCKRFFEMVN…MLCTLWKAII (726 aa)). The Protein kinase domain maps to 687–945 (NGDRVVLGKG…ANDLLIDEFL (259 aa)). Residues 693–701 (LGKGTYGIV) and K716 each bind ATP. Residue Y725 is modified to Phosphotyrosine. Residue D810 is the Proton acceptor of the active site. At T820 the chain carries Phosphothreonine; by autocatalysis. T845 is subject to Phosphothreonine; by autocatalysis, MELK and MAP3K6. At T849 the chain carries Phosphothreonine; by autocatalysis. S965 carries the post-translational modification Phosphoserine. Phosphoserine; by autocatalysis is present on S973. 2 positions are modified to phosphoserine: S1036 and S1040. The interval 1188–1215 (ASESDTADPEDLDVEDEHEELSSNQTVR) is disordered. Over residues 1192–1206 (DTADPEDLDVEDEHE) the composition is skewed to acidic residues. The stretch at 1252 to 1292 (LGRMKIETNRLLEELVRKERELQALLHQAIEEKDQEIRHLK) forms a coiled coil.

Belongs to the protein kinase superfamily. STE Ser/Thr protein kinase family. MAP kinase kinase kinase subfamily. Homodimer when inactive. Binds both upstream activators and downstream substrates in multimolecular complexes. Part of a cytoplasmic complex made of HIPK1, DAB2IP and MAP3K5 in response to TNF. This complex formation promotes MAP3K5-JNK activation and subsequent apoptosis. Interacts with SOCS1 which recognizes phosphorylation of Tyr-725 and induces MAP3K5/ASK1 degradation in endothelial cells. Interacts with the 14-3-3 family proteins such as YWHAB, YWHAE, YWHAQ, YWHAH, YWHAZ and SFN. Interacts with ARRB2, BIRC2, DAB2IP, IGF1R, MAP3K6/ASK2, PIM1, PGAM5, SOCS1, STUB1, TRAF2 and TXN. Interacts with ERN1 in a TRAF2-dependent manner. Interacts with calcineurin subunit PPP3R1, PPP5C, PPM1L and TRAF6. Interacts (via N-terminus) with RAF1 and this interaction inhibits the proapoptotic function of MAP3K5. Interacts with DAB2IP (via N-terminus C2 domain); the interaction occurs in a TNF-alpha-dependent manner. Interacts with DUSP13A; may positively regulate apoptosis. Interacts with PPIA/CYPA. Interacts with PRMT1; the interaction results in MAP3K5 methylation by PRMT1 which inhibits MAP3K5 activation. Interacts with TRAF2; the interaction is inhibited by PRMT1. Interacts with TRIM48. Mg(2+) is required as a cofactor. Ser-90 and Ser-1040 are inactivating phosphorylation sites, the former of which is phosphorylated by AKT1. Phosphorylated at Ser-973 which induces association of MAP3K5/ASK1 with the 14-3-3 family proteins and suppresses MAP3K5/ASK1 activity. Calcineurin (CN) dephosphorylates this site. Also dephosphorylated and activated by PGAM5. Phosphorylated at Thr-845 through autophosphorylation and by MAP3K6/ASK2 which leads to activation. Thr-845 is dephosphorylated by PPP5C. Phosphorylation at Ser-973 in response to oxidative stress is negatively regulated by PPIA/CYPA. In terms of processing, ubiquitinated. Tumor necrosis factor (TNF) induces TNFR2-dependent ubiquitination, leading to proteasomal degradation. Ubiquitinated by RC3H2 in a TRIM48-dependent manner. Post-translationally, methylation at Arg-85 and Arg-87 by PRMT1 promotes association of MAP3K5 with thioredoxin and negatively regulates MAP3K5 association with TRAF2, inhibiting MAP3K5 activation. Methylation is blocked by ubiquitination of PRMT1 by TRIM48. As to expression, expressed in various adult mouse tissues including heart, brain, lung, liver and kidney.

The protein resides in the cytoplasm. It is found in the endoplasmic reticulum. It carries out the reaction L-seryl-[protein] + ATP = O-phospho-L-seryl-[protein] + ADP + H(+). The catalysed reaction is L-threonyl-[protein] + ATP = O-phospho-L-threonyl-[protein] + ADP + H(+). Its activity is regulated as follows. Activated by various stressors, including oxidative stress, endoplasmic reticulum stress, and calcium overload, as well as by receptor-mediated inflammatory signals, such as the tumor necrosis factor (TNF) and lipopolysaccharide (LPS). Homophilic association of MAP3K5/ASK1 through the C-terminal coiled-coil domains and the heteromeric complex formation of MAP3K5/ASK1 with the reduced form of thioredoxin (TXN), constitutes an inactive form of the kinase. Upon ROS-induced dissociation of TXN from MAP3K5/ASK1, TRAF2 and TRAF6 are reciprocally recruited to MAP3K5/ASK1 and form the active MAP3K5/ASK1 signalosome, in which TRAF2 and TRAF6 appear to facilitate the active configuration of MAP3K5/ASK1. MAP3K5/ASK1 activity is also regulated through several phosphorylation and dephosphorylation events. Thr-845 is an activating phosphorylation site that is autophosphorylated and phosphorylated by MAP3K6/ASK2 and dephosphorylated by PPP5C. Ser-90 and Ser-1040 are inactivating phosphorylation sites, the former of which is phosphorylated by AKT1. Phosphorylation of Ser-973 induces association of MAP3K5/ASK1 with the 14-3-3 family proteins, which suppresses MAP3K5/ASK1 activity. Calcium/calmodulin-activated protein phosphatase calcineurin (PPP3CA) has been shown to directly dephosphorylate this site. SOCS1 binds to ASK1 by recognizing phosphorylation of Tyr-725 and induces MAP3K5/ASK1 degradation in endothelial cells. Also dephosphorylated and activated by PGAM5. Contains an N-terminal autoinhibitory domain. Serine/threonine kinase which acts as an essential component of the MAP kinase signal transduction pathway. Plays an important role in the cascades of cellular responses evoked by changes in the environment. Mediates signaling for determination of cell fate such as differentiation and survival. Plays a crucial role in the apoptosis signal transduction pathway through mitochondria-dependent caspase activation. MAP3K5/ASK1 is required for the innate immune response, which is essential for host defense against a wide range of pathogens. Mediates signal transduction of various stressors like oxidative stress as well as by receptor-mediated inflammatory signals, such as the tumor necrosis factor (TNF) or lipopolysaccharide (LPS). Once activated, acts as an upstream activator of the MKK/JNK signal transduction cascade and the p38 MAPK signal transduction cascade through the phosphorylation and activation of several MAP kinase kinases like MAP2K4/SEK1, MAP2K3/MKK3, MAP2K6/MKK6 and MAP2K7/MKK7. These MAP2Ks in turn activate p38 MAPKs and c-jun N-terminal kinases (JNKs). Both p38 MAPK and JNKs control the transcription factors activator protein-1 (AP-1). The protein is Mitogen-activated protein kinase kinase kinase 5 (Map3k5) of Mus musculus (Mouse).